We begin with the raw amino-acid sequence, 344 residues long: L-lactate dehydrogenase B (344 aa).

NAD(+) is bound by residues 62 to 67 (DALPDK) and Arg109. Positions 116, 148, and 179 each coordinate substrate. Residue Asn148 participates in NAD(+) binding. His203 serves as the catalytic Proton acceptor. A substrate-binding site is contributed by Thr258.

The protein belongs to the LDH/MDH superfamily. LDH family. In terms of assembly, tetramer that arise from random association of LDH-A and LDH-B.

It carries out the reaction (S)-lactate + NAD(+) = pyruvate + NADH + H(+). Its pathway is fermentation; pyruvate fermentation to lactate; (S)-lactate from pyruvate: step 1/1. This is L-lactate dehydrogenase B from Hordeum vulgare (Barley).